Reading from the N-terminus, the 460-residue chain is Cysteine--tRNA ligase (460 aa).

A Zn(2+)-binding site is contributed by C28. The 'HIGH' region signature appears at 30–40 (MTVYDYCHLGH). Residues C209, H234, and E238 each contribute to the Zn(2+) site. Positions 266–270 (KMSKS) match the 'KMSKS' region motif. ATP is bound at residue K269.

Belongs to the class-I aminoacyl-tRNA synthetase family. As to quaternary structure, monomer. The cofactor is Zn(2+).

The protein resides in the cytoplasm. It catalyses the reaction tRNA(Cys) + L-cysteine + ATP = L-cysteinyl-tRNA(Cys) + AMP + diphosphate. The polypeptide is Cysteine--tRNA ligase (Pseudomonas syringae pv. syringae (strain B728a)).